The sequence spans 142 residues: Nucleoside diphosphate kinase (142 aa).

Residues Lys-11, Phe-59, Arg-87, Thr-93, Arg-104, and Asn-114 each contribute to the ATP site. His-117 functions as the Pros-phosphohistidine intermediate in the catalytic mechanism.

Belongs to the NDK family. In terms of assembly, homotetramer. The cofactor is Mg(2+).

Its subcellular location is the cytoplasm. It catalyses the reaction a 2'-deoxyribonucleoside 5'-diphosphate + ATP = a 2'-deoxyribonucleoside 5'-triphosphate + ADP. It carries out the reaction a ribonucleoside 5'-diphosphate + ATP = a ribonucleoside 5'-triphosphate + ADP. Major role in the synthesis of nucleoside triphosphates other than ATP. The ATP gamma phosphate is transferred to the NDP beta phosphate via a ping-pong mechanism, using a phosphorylated active-site intermediate. In Aeromonas hydrophila subsp. hydrophila (strain ATCC 7966 / DSM 30187 / BCRC 13018 / CCUG 14551 / JCM 1027 / KCTC 2358 / NCIMB 9240 / NCTC 8049), this protein is Nucleoside diphosphate kinase.